Consider the following 447-residue polypeptide: Na(+)-translocating NADH-quinone reductase subunit A (447 aa).

The protein belongs to the NqrA family. As to quaternary structure, composed of six subunits; NqrA, NqrB, NqrC, NqrD, NqrE and NqrF.

It carries out the reaction a ubiquinone + n Na(+)(in) + NADH + H(+) = a ubiquinol + n Na(+)(out) + NAD(+). NQR complex catalyzes the reduction of ubiquinone-1 to ubiquinol by two successive reactions, coupled with the transport of Na(+) ions from the cytoplasm to the periplasm. NqrA to NqrE are probably involved in the second step, the conversion of ubisemiquinone to ubiquinol. This Klebsiella pneumoniae subsp. pneumoniae (strain ATCC 700721 / MGH 78578) protein is Na(+)-translocating NADH-quinone reductase subunit A.